Here is a 411-residue protein sequence, read N- to C-terminus: Adenylosuccinate synthetase (411 aa).

GTP contacts are provided by residues Gly11–Lys17 and Gly39–Thr41. Asp12 (proton acceptor) is an active-site residue. Residues Asp12 and Gly39 each contribute to the Mg(2+) site. Residues Asp12–Lys15, Asn37–His40, Thr121, Arg135, Gln215, Thr230, and Arg294 contribute to the IMP site. The active-site Proton donor is the His40. Residue Thr290–Arg296 coordinates substrate. GTP is bound by residues Arg296, Lys322–Asp324, and Ser400–Ser402.

It belongs to the adenylosuccinate synthetase family. As to quaternary structure, homodimer. Requires Mg(2+) as cofactor.

The protein resides in the cytoplasm. It carries out the reaction IMP + L-aspartate + GTP = N(6)-(1,2-dicarboxyethyl)-AMP + GDP + phosphate + 2 H(+). It participates in purine metabolism; AMP biosynthesis via de novo pathway; AMP from IMP: step 1/2. Plays an important role in the de novo pathway of purine nucleotide biosynthesis. Catalyzes the first committed step in the biosynthesis of AMP from IMP. The chain is Adenylosuccinate synthetase from Helicobacter acinonychis (strain Sheeba).